Here is a 392-residue protein sequence, read N- to C-terminus: p21-activated protein kinase-interacting protein 1 (392 aa).

6 WD repeats span residues 33–72, 73–113, 114–155, 156–195, 196–235, and 236–275; these read VADFTHHAHTASLSAVAVNSRFVVTGSKDETIHIYDMKKK, IEHG…AKKW, ECLK…LVEG, RSAFIKNIKQNAHIVEWSPRGEQYVVIIQNKIDIYQLDTA, SISGTITNEKRISSVKFLSESVLAVAGDEEVIRFFDCDSL, and VCLCEFKAHENRVKDMFSFEIPEHHVIVSASSDGFIKMWK. A disordered region spans residues 312-392; that stretch reads SLPPAAEPSP…RKKKKIKTMQ (81 aa). Serine 320 bears the Phosphoserine mark. Residues 325 to 345 show a composition bias toward basic and acidic residues; it reads EQSKIGKKEPGDTVHKEEKRS. The span at 381–392 shows a compositional bias: basic residues; it reads KKRKKKKIKTMQ.

In terms of assembly, interacts with PAK1. In terms of tissue distribution, expressed in brain, colon, heart, kidney, liver, lung, muscle, peripheral blood leukocytes, placenta, small intestine, spleen and thymus.

Its subcellular location is the nucleus. It is found in the nucleolus. Functionally, negatively regulates the PAK1 kinase. PAK1 is a member of the PAK kinase family, which has been shown to play a positive role in the regulation of signaling pathways involving MAPK8 and RELA. PAK1 exists as an inactive homodimer, which is activated by binding of small GTPases such as CDC42 to an N-terminal regulatory domain. PAK1IP1 also binds to the N-terminus of PAK1, and inhibits the specific activation of PAK1 by CDC42. May be involved in ribosomal large subunit assembly. The chain is p21-activated protein kinase-interacting protein 1 (PAK1IP1) from Homo sapiens (Human).